The primary structure comprises 255 residues: uncharacterized protein (255 aa).

Residues 1-22 (MNILSPIIIIIILIVLFYVMRM) form the signal peptide.

This is an uncharacterized protein from Acanthamoeba polyphaga (Amoeba).